We begin with the raw amino-acid sequence, 530 residues long: ATP synthase subunit alpha (530 aa).

Residue 169–176 coordinates ATP; it reads GDRQTGKT.

It belongs to the ATPase alpha/beta chains family. In terms of assembly, F-type ATPases have 2 components, CF(1) - the catalytic core - and CF(0) - the membrane proton channel. CF(1) has five subunits: alpha(3), beta(3), gamma(1), delta(1), epsilon(1). CF(0) has three main subunits: a(1), b(2) and c(9-12). The alpha and beta chains form an alternating ring which encloses part of the gamma chain. CF(1) is attached to CF(0) by a central stalk formed by the gamma and epsilon chains, while a peripheral stalk is formed by the delta and b chains.

The protein resides in the cell membrane. The enzyme catalyses ATP + H2O + 4 H(+)(in) = ADP + phosphate + 5 H(+)(out). In terms of biological role, produces ATP from ADP in the presence of a proton gradient across the membrane. The alpha chain is a regulatory subunit. The chain is ATP synthase subunit alpha from Mycoplasmopsis synoviae (strain 53) (Mycoplasma synoviae).